A 476-amino-acid chain; its full sequence is Sulfate adenylyltransferase subunit 1 (476 aa).

One can recognise a tr-type G domain in the interval 24–238 (KSLLRFLTCG…ELLEYVDIDR (215 aa)). Positions 33–40 (GSVDDGKS) are G1. Residue 33–40 (GSVDDGKS) participates in GTP binding. The G2 stretch occupies residues 91–95 (GITID). The G3 stretch occupies residues 112–115 (DTPG). GTP contacts are provided by residues 112–116 (DTPGH) and 167–170 (NKMD). Residues 167–170 (NKMD) are G4. The interval 205-207 (SAL) is G5.

It belongs to the TRAFAC class translation factor GTPase superfamily. Classic translation factor GTPase family. CysN/NodQ subfamily. In terms of assembly, heterodimer composed of CysD, the smaller subunit, and CysN.

The catalysed reaction is sulfate + ATP + H(+) = adenosine 5'-phosphosulfate + diphosphate. It participates in sulfur metabolism; hydrogen sulfide biosynthesis; sulfite from sulfate: step 1/3. In terms of biological role, with CysD forms the ATP sulfurylase (ATPS) that catalyzes the adenylation of sulfate producing adenosine 5'-phosphosulfate (APS) and diphosphate, the first enzymatic step in sulfur assimilation pathway. APS synthesis involves the formation of a high-energy phosphoric-sulfuric acid anhydride bond driven by GTP hydrolysis by CysN coupled to ATP hydrolysis by CysD. The polypeptide is Sulfate adenylyltransferase subunit 1 (Vibrio cholerae serotype O1 (strain M66-2)).